The sequence spans 417 residues: Carboxypeptidase A2 (417 aa).

Residues Met-1–Cys-16 form the signal peptide. The propeptide at Gln-17–Arg-112 is activation peptide. A Peptidase M14 domain is found at Ala-120–Val-412. Zn(2+)-binding residues include His-177 and Glu-180. Substrate-binding positions include His-177–Glu-180, Arg-235, and Asn-252–Arg-253. Cys-246 and Cys-269 are disulfide-bonded. Zn(2+) is bound at residue His-304. Ser-305–Tyr-306 contacts substrate. Cysteines 318 and 352 form a disulfide. Tyr-356 contacts substrate. Glu-378 (proton donor/acceptor) is an active-site residue.

This sequence belongs to the peptidase M14 family. The cofactor is Zn(2+).

The protein resides in the secreted. It carries out the reaction Similar to that of carboxypeptidase A (EC 3.4.17.1), but with a preference for bulkier C-terminal residues.. Carboxypeptidase that catalyzes the release of a C-terminal amino acid, with a preference for large aromatic C-terminal residues. The protein is Carboxypeptidase A2 (Cpa2) of Rattus norvegicus (Rat).